Here is a 289-residue protein sequence, read N- to C-terminus: MEIINTIAALRHRLDACRKAGKSIGFVPTMGYLHKGHLTLVEQAKAENAVTVASIFVNPLQFGKGEDLEKYPRDLERDSEMLEAAGVDFLFAPGVADMYPRPMETVVDLPGLGGELEGKARPGHFAGVATVVTKLFNIVQPDAAYFGEKDYQQVAIIRRMVDDLAMPVRVVPVATVREADGLACSSRNVYLTEEQRAAATIVPKALDEAERLYKAGMRDTAEMEAALAAFIAREPQAKPDVVAVRHPDTLATLPHLDQPFLVLLYVQIGTTKLLDNRVITIKSKKEAAE.

Residue 30–37 (MGYLHKGH) coordinates ATP. His-37 (proton donor) is an active-site residue. Position 61 (Gln-61) interacts with (R)-pantoate. Gln-61 is a beta-alanine binding site. Residue 147 to 150 (GEKD) participates in ATP binding. Gln-153 contributes to the (R)-pantoate binding site. ATP is bound by residues Val-176 and 184–187 (CSSR).

The protein belongs to the pantothenate synthetase family. Homodimer.

The protein resides in the cytoplasm. It catalyses the reaction (R)-pantoate + beta-alanine + ATP = (R)-pantothenate + AMP + diphosphate + H(+). The protein operates within cofactor biosynthesis; (R)-pantothenate biosynthesis; (R)-pantothenate from (R)-pantoate and beta-alanine: step 1/1. Catalyzes the condensation of pantoate with beta-alanine in an ATP-dependent reaction via a pantoyl-adenylate intermediate. The chain is Pantothenate synthetase from Allorhizobium ampelinum (strain ATCC BAA-846 / DSM 112012 / S4) (Agrobacterium vitis (strain S4)).